The chain runs to 275 residues: Elongation factor Ts (275 aa).

Residues 76-79 (TDFV) form an involved in Mg(2+) ion dislocation from EF-Tu region.

The protein belongs to the EF-Ts family.

It is found in the cytoplasm. In terms of biological role, associates with the EF-Tu.GDP complex and induces the exchange of GDP to GTP. It remains bound to the aminoacyl-tRNA.EF-Tu.GTP complex up to the GTP hydrolysis stage on the ribosome. The polypeptide is Elongation factor Ts (Nocardia farcinica (strain IFM 10152)).